A 234-amino-acid chain; its full sequence is Thrombin-like enzyme ancrod (234 aa).

In terms of domain architecture, Peptidase S1 spans 1–227 (VIGGDECNIN…YRDWVNNVIA (227 aa)). Cystine bridges form between Cys-7-Cys-141, Cys-28-Cys-44, Cys-78-Cys-232, Cys-120-Cys-188, Cys-152-Cys-167, and Cys-178-Cys-203. A glycan (N-linked (GlcNAc...) asparagine) is linked at Asn-23. His-43 acts as the Charge relay system in catalysis. Asn-79 is a glycosylation site (N-linked (GlcNAc...) asparagine). The active-site Charge relay system is the Asp-88. Asn-99 and Asn-148 each carry an N-linked (GlcNAc...) asparagine glycan. The active-site Charge relay system is Ser-182. Asn-229 carries N-linked (GlcNAc...) asparagine glycosylation.

Belongs to the peptidase S1 family. Snake venom subfamily. Monomer. As to expression, expressed by the venom gland.

It localises to the secreted. It catalyses the reaction Selective cleavage of Arg-|-Xaa bond in fibrinogen, to form fibrin, and release fibrinopeptide A. The specificity of further degradation of fibrinogen varies with species origin of the enzyme.. In terms of biological role, thrombin-like snake venom serine protease that acts as an anticoagulant. It cleaves fibrinogen (FGA) to split off the A-fibrinopeptides (A, AY and AP), but not the B-fibrinopeptide. The resulting fibrin polymers are imperfectly formed and much smaller in size (1 to 2 um long) than the fibrin polymers produced by the action of thrombin. These ancrod-induced microthrombi are friable, unstable, urea-soluble and have significantly degraded alpha chains. They do not cross-link to form thrombi. They are markedly susceptible to digestion by plasmin and are rapidly removed from circulation by either reticuloendothelial phagocytosis or normal fibrinolysis, or both. Anticoagulation through the removal of fibrinogen from the blood is rapid, occurring within hours following its administration. It does not activate plasminogen and does not degrade preformed, fully cross-linked thrombin fibrin. It also reduces the level of plasminogen activator inhibitor (PAI) and may stimulate the release of tissue plasminogen activator (PLAT) from the endothelium. The profibrinolytic effect of these 2 actions appears to be limited to local microthrombus degradation. This Calloselasma rhodostoma (Malayan pit viper) protein is Thrombin-like enzyme ancrod.